A 113-amino-acid chain; its full sequence is Large ribosomal subunit protein P1 (113 aa).

Low complexity predominate over residues Thr-56–Gly-66. The segment at Thr-56–Gly-113 is disordered. The span at Glu-74 to Gly-105 shows a compositional bias: acidic residues.

Belongs to the eukaryotic ribosomal protein P1/P2 family. As to quaternary structure, part of the 50S ribosomal subunit. Homodimer, it forms part of the ribosomal stalk which helps the ribosome interact with GTP-bound translation factors. Forms a heptameric uL10/P0(P1)2(P1)2(P1)2 complex, where uL10/P0 forms an elongated spine to which the P1 dimers bind in a sequential fashion.

Its function is as follows. Forms part of the ribosomal stalk, playing a central role in the interaction of the ribosome with GTP-bound translation factors. This Haloferax volcanii (strain ATCC 29605 / DSM 3757 / JCM 8879 / NBRC 14742 / NCIMB 2012 / VKM B-1768 / DS2) (Halobacterium volcanii) protein is Large ribosomal subunit protein P1.